The primary structure comprises 163 residues: NADH-quinone oxidoreductase subunit I 1 (163 aa).

4Fe-4S ferredoxin-type domains follow at residues 53 to 83 (LRRYPNGEERCIACKLCEAICPAQAITIEAG) and 94 to 123 (VRYDIDMVKCIYCGFCQEACPVDAIVEGPN). Cysteine 63, cysteine 66, cysteine 69, cysteine 73, cysteine 103, cysteine 106, cysteine 109, and cysteine 113 together coordinate [4Fe-4S] cluster.

This sequence belongs to the complex I 23 kDa subunit family. As to quaternary structure, NDH-1 is composed of 14 different subunits. Subunits NuoA, H, J, K, L, M, N constitute the membrane sector of the complex. It depends on [4Fe-4S] cluster as a cofactor.

The protein resides in the cell inner membrane. It carries out the reaction a quinone + NADH + 5 H(+)(in) = a quinol + NAD(+) + 4 H(+)(out). Its function is as follows. NDH-1 shuttles electrons from NADH, via FMN and iron-sulfur (Fe-S) centers, to quinones in the respiratory chain. The immediate electron acceptor for the enzyme in this species is believed to be ubiquinone. Couples the redox reaction to proton translocation (for every two electrons transferred, four hydrogen ions are translocated across the cytoplasmic membrane), and thus conserves the redox energy in a proton gradient. The chain is NADH-quinone oxidoreductase subunit I 1 from Rhizobium etli (strain ATCC 51251 / DSM 11541 / JCM 21823 / NBRC 15573 / CFN 42).